A 356-amino-acid polypeptide reads, in one-letter code: 3-isopropylmalate dehydrogenase (356 aa).

Residues Arg-90, Arg-100, Arg-128, and Asp-222 each coordinate substrate. Residues Asp-222, Asp-246, and Asp-250 each contribute to the Mg(2+) site. 280-292 (GSAPDIAGKGVAN) serves as a coordination point for NAD(+).

The protein belongs to the isocitrate and isopropylmalate dehydrogenases family. LeuB type 1 subfamily. In terms of assembly, homodimer. The cofactor is Mg(2+). Requires Mn(2+) as cofactor.

Its subcellular location is the cytoplasm. It catalyses the reaction (2R,3S)-3-isopropylmalate + NAD(+) = 4-methyl-2-oxopentanoate + CO2 + NADH. Its pathway is amino-acid biosynthesis; L-leucine biosynthesis; L-leucine from 3-methyl-2-oxobutanoate: step 3/4. Functionally, catalyzes the oxidation of 3-carboxy-2-hydroxy-4-methylpentanoate (3-isopropylmalate) to 3-carboxy-4-methyl-2-oxopentanoate. The product decarboxylates to 4-methyl-2 oxopentanoate. The protein is 3-isopropylmalate dehydrogenase of Albidiferax ferrireducens (strain ATCC BAA-621 / DSM 15236 / T118) (Rhodoferax ferrireducens).